The primary structure comprises 707 residues: MSPFLRIGLSNFDCGTCQACQGEAVNPYCAVLVKEYVESENGQMYIQKKPTMYPPWDSTFDAHINKGRVMQIIVKGKNVDLISETTVELYSLAERCRKNNGRTEIWLELKPQGRMLMNARYFLEMSDTKDMSEFENEGFFALHHRRGAIKQAKVHHVKCHEFTATFFPQPTFCSVCHEFVWGLNKQGYQCRRCNAAIHKKCIDKVIAKCTGSAINSRETMFHKERFKIDMPHRFKVYNYKSPTFCEHCGTLLWGLARQGLKCDACGMNVHHRCQTKVANLCGINQKLMAEALAMIESTQQARTLRDSEHIFREGPIEISFPRSIKSETRPPCVPTPGKSEPQGICWESPLDGADKTAQPPEPEVNLQRASLQLKLKIDDFILHKMLGKGSFGKVFLAEFKRTKQFFAIKALKKDVVLMDDDVECTMVEKRVLSLAWEHPFLTHMFCTFQTKENLFFVMEYLNGGDLMYHIQSCHKFDLSRATFYAAEVILGLQFLHSKGIVYRDLKLDNILLDRDGHIKIADFGMCKENMLGDAKTNTFCGTPDYIAPEILLGQKYNHSVDWWSFGVLLYEMLIGQSPFHGQDEEELFHSIRMDNPFYPRWLEREAKDLLVKLFVREPEKRLGVRGDIRQHPLFREINWEELERKEIDPPFRPKVKSPYDCSNFDKEFLSEKPRLSFADRALINSMDQNMFSNFSFINPGMETLICS.

The 107-residue stretch at 1-107 (MSPFLRIGLS…KNNGRTEIWL (107 aa)) folds into the C2 domain. Tyr90 carries the post-translational modification Phosphotyrosine; by LCK. The segment at 159–209 (CHEFTATFFPQPTFCSVCHEFVWGLNKQGYQCRRCNAAIHKKCIDKVIAKC) adopts a Phorbol-ester/DAG-type 1 zinc-finger fold. Residue Thr219 is modified to Phosphothreonine; by autocatalysis. The Phorbol-ester/DAG-type 2 zinc finger occupies 231–281 (PHRFKVYNYKSPTFCEHCGTLLWGLARQGLKCDACGMNVHHRCQTKVANLC). Ser348 is subject to Phosphoserine. Residues 380 to 634 (FILHKMLGKG…RGDIRQHPLF (255 aa)) form the Protein kinase domain. Residues 386-394 (LGKGSFGKV) and Lys409 contribute to the ATP site. Asp504 (proton acceptor) is an active-site residue. Thr538 is modified (phosphothreonine; by PDPK1). In terms of domain architecture, AGC-kinase C-terminal spans 635–706 (REINWEELER…INPGMETLIC (72 aa)). Residues Ser676 and Ser685 each carry the phosphoserine modification. The residue at position 695 (Ser695) is a Phosphoserine; by autocatalysis.

The protein belongs to the protein kinase superfamily. AGC Ser/Thr protein kinase family. PKC subfamily. In terms of assembly, part of a membrane raft complex composed at least of BCL10, CARD11, MALT1 and IKBKB. Interacts with GLRX3 (via N-terminus). Interacts with ECT2. Interacts with CCDC88A/GIV; the interaction leads to phosphorylation of CCDC88A and inhibition of its guanine nucleotide exchange factor activity. Interacts with CD28. Mg(2+) is required as a cofactor. Post-translationally, autophosphorylation at Thr-219 is required for targeting to the TCR and cellular function of PRKCQ upon antigen receptor ligation. Following TCR stimulation, phosphorylated at Tyr-90 and Ser-685.

The protein localises to the cytoplasm. Its subcellular location is the cell membrane. It catalyses the reaction L-seryl-[protein] + ATP = O-phospho-L-seryl-[protein] + ADP + H(+). It carries out the reaction L-threonyl-[protein] + ATP = O-phospho-L-threonyl-[protein] + ADP + H(+). Novel PKCs (PRKCD, PRKCE, PRKCH and PRKCQ) are calcium-insensitive, but activated by diacylglycerol (DAG) and phosphatidylserine. Three specific sites; Thr-538 (activation loop of the kinase domain), Ser-676 (turn motif) and Ser-695 (hydrophobic region), need to be phosphorylated for its full activation. Its function is as follows. Calcium-independent, phospholipid- and diacylglycerol (DAG)-dependent serine/threonine-protein kinase that mediates non-redundant functions in T-cell receptor (TCR) signaling, including T-cells activation, proliferation, differentiation and survival, by mediating activation of multiple transcription factors such as NF-kappa-B, JUN, NFATC1 and NFATC2. In TCR-CD3/CD28-co-stimulated T-cells, is required for the activation of NF-kappa-B and JUN, which in turn are essential for IL2 production, and participates in the calcium-dependent NFATC1 and NFATC2 transactivation. Mediates the activation of the canonical NF-kappa-B pathway (NFKB1) by direct phosphorylation of CARD11 on several serine residues, inducing CARD11 association with lipid rafts and recruitment of the BCL10-MALT1 complex, which then activates IKK complex, resulting in nuclear translocation and activation of NFKB1. May also play an indirect role in activation of the non-canonical NF-kappa-B (NFKB2) pathway. In the signaling pathway leading to JUN activation, acts by phosphorylating the mediator STK39/SPAK and may not act through MAP kinases signaling. Plays a critical role in TCR/CD28-induced NFATC1 and NFATC2 transactivation by participating in the regulation of reduced inositol 1,4,5-trisphosphate generation and intracellular calcium mobilization. After costimulation of T-cells through CD28 can phosphorylate CBLB and is required for the ubiquitination and subsequent degradation of CBLB, which is a prerequisite for the activation of TCR. During T-cells differentiation, plays an important role in the development of T-helper 2 (Th2) cells following immune and inflammatory responses, and, in the development of inflammatory autoimmune diseases, is necessary for the activation of IL17-producing Th17 cells. May play a minor role in Th1 response. Upon TCR stimulation, mediates T-cell protective survival signal by phosphorylating BAD, thus protecting T-cells from BAD-induced apoptosis, and by up-regulating BCL-X(L)/BCL2L1 levels through NF-kappa-B and JUN pathways. In platelets, regulates signal transduction downstream of the ITGA2B, CD36/GP4, F2R/PAR1 and F2RL3/PAR4 receptors, playing a positive role in 'outside-in' signaling and granule secretion signal transduction. May relay signals from the activated ITGA2B receptor by regulating the uncoupling of WASP and WIPF1, thereby permitting the regulation of actin filament nucleation and branching activity of the Arp2/3 complex. May mediate inhibitory effects of free fatty acids on insulin signaling by phosphorylating IRS1, which in turn blocks IRS1 tyrosine phosphorylation and downstream activation of the PI3K/AKT pathway. Phosphorylates MSN (moesin) in the presence of phosphatidylglycerol or phosphatidylinositol. Phosphorylates PDPK1 at 'Ser-504' and 'Ser-532' and negatively regulates its ability to phosphorylate PKB/AKT1. Phosphorylates CCDC88A/GIV and inhibits its guanine nucleotide exchange factor activity. Phosphorylates and activates LRRK1, which phosphorylates RAB proteins involved in intracellular trafficking. The protein is Protein kinase C theta type (Prkcq) of Rattus norvegicus (Rat).